The primary structure comprises 177 residues: MKLPKEGDFITIQSYKHDGSLHRTWRDTMVLKTTENALIGVNDHTLVTESDGRRWVTREPAIVYFHKKYWFNIIAMIRDNGVSYYCNLASPYMMDTEALKYIDYDLDVKVFADGEKRLLDVDEYGIHKKEMQYSADMDFILKENVKILVDWINHEKGPFSKAYITIWYKRYLELKNR.

The active-site Proton donor is the Arg23. Mg(2+) is bound by residues Asn87, Asp103, Asp105, Asp107, Asp120, and Glu123.

This sequence belongs to the Ntdp family. Mg(2+) is required as a cofactor.

The enzyme catalyses a ribonucleoside 5'-triphosphate + H2O = a ribonucleoside 5'-diphosphate + phosphate + H(+). It carries out the reaction a ribonucleoside 5'-diphosphate + H2O = a ribonucleoside 5'-phosphate + phosphate + H(+). Has nucleoside phosphatase activity towards nucleoside triphosphates and nucleoside diphosphates. The protein is Nucleoside triphosphate/diphosphate phosphatase of Streptococcus pyogenes serotype M3 (strain ATCC BAA-595 / MGAS315).